Here is a 182-residue protein sequence, read N- to C-terminus: Segregation and condensation protein B (182 aa).

Belongs to the ScpB family. Homodimer. Homodimerization may be required to stabilize the binding of ScpA to the Smc head domains. Component of a cohesin-like complex composed of ScpA, ScpB and the Smc homodimer, in which ScpA and ScpB bind to the head domain of Smc. The presence of the three proteins is required for the association of the complex with DNA.

The protein resides in the cytoplasm. In terms of biological role, participates in chromosomal partition during cell division. May act via the formation of a condensin-like complex containing Smc and ScpA that pull DNA away from mid-cell into both cell halves. The sequence is that of Segregation and condensation protein B from Staphylococcus saprophyticus subsp. saprophyticus (strain ATCC 15305 / DSM 20229 / NCIMB 8711 / NCTC 7292 / S-41).